We begin with the raw amino-acid sequence, 334 residues long: Formamidase (334 aa).

The 247-residue stretch at 14 to 260 folds into the CN hydrolase domain; the sequence is FLVAAIQFPV…WEIVTGEIYP (247 aa). The active-site Proton acceptor is the E60. The active-site Proton donor is the K133. Residue C166 is the Nucleophile of the active site.

Belongs to the carbon-nitrogen hydrolase superfamily. Aliphatic amidase family.

It carries out the reaction formamide + H2O = formate + NH4(+). Is an aliphatic amidase with a restricted substrate specificity, as it only hydrolyzes formamide. This Helicobacter pylori (strain J99 / ATCC 700824) (Campylobacter pylori J99) protein is Formamidase.